Here is a 412-residue protein sequence, read N- to C-terminus: Transforming growth factor beta-2 proprotein (412 aa).

A signal peptide spans 1–20 (MHCYLLSVFLTLDLAAVALS). N-linked (GlcNAc...) asparagine glycans are attached at residues N72, N139, and N240. Intrachain disulfides connect C307–C316, C315–C378, C344–C409, and C348–C411.

Belongs to the TGF-beta family. Interacts with Transforming growth factor beta-2 (TGF-beta-2) chain; interaction is non-covalent and maintains (TGF-beta-2) in a latent state. As to quaternary structure, homodimer; disulfide-linked. Interacts with TGF-beta receptors (TGFBR1 and TGFBR2), leading to signal transduction. In terms of processing, the precursor proprotein is cleaved in the Golgi apparatus to form Transforming growth factor beta-2 (TGF-beta-2) and Latency-associated peptide (LAP) chains, which remain non-covalently linked, rendering TGF-beta-2 inactive.

It localises to the secreted. The protein localises to the extracellular space. It is found in the extracellular matrix. Functionally, precursor of the Latency-associated peptide (LAP) and Transforming growth factor beta-2 (TGF-beta-2) chains, which constitute the regulatory and active subunit of TGF-beta-2, respectively. Its function is as follows. Required to maintain the Transforming growth factor beta-2 (TGF-beta-2) chain in a latent state during storage in extracellular matrix. Associates non-covalently with TGF-beta-2 and regulates its activation via interaction with 'milieu molecules', such as LTBP1 and LRRC32/GARP, that control activation of TGF-beta-2. Multifunctional protein that regulates various processes such as angiogenesis and heart development. Activation into mature form follows different steps: following cleavage of the proprotein in the Golgi apparatus, Latency-associated peptide (LAP) and Transforming growth factor beta-2 (TGF-beta-2) chains remain non-covalently linked rendering TGF-beta-2 inactive during storage in extracellular matrix. At the same time, LAP chain interacts with 'milieu molecules', such as LTBP1 and LRRC32/GARP, that control activation of TGF-beta-2 and maintain it in a latent state during storage in extracellular milieus. Once activated following release of LAP, TGF-beta-2 acts by binding to TGF-beta receptors (TGFBR1 and TGFBR2), which transduce signal. The polypeptide is Transforming growth factor beta-2 proprotein (TGFB2) (Gallus gallus (Chicken)).